The sequence spans 502 residues: Mannitol 2-dehydrogenase (502 aa).

37 to 48 lines the NAD(+) pocket; sequence IVHVGVGGFHRA.

The protein belongs to the mannitol dehydrogenase family. Monomer.

It catalyses the reaction D-mannitol + NAD(+) = D-fructose + NADH + H(+). Functionally, catalyzes the NAD(H)-dependent interconversion of D-fructose and D-mannitol in the mannitol metabolic pathway. This Aspergillus oryzae (strain ATCC 42149 / RIB 40) (Yellow koji mold) protein is Mannitol 2-dehydrogenase.